A 458-amino-acid chain; its full sequence is ATP synthase subunit beta (458 aa).

148–155 (GGAGVGKT) contributes to the ATP binding site.

Belongs to the ATPase alpha/beta chains family. In terms of assembly, F-type ATPases have 2 components, CF(1) - the catalytic core - and CF(0) - the membrane proton channel. CF(1) has five subunits: alpha(3), beta(3), gamma(1), delta(1), epsilon(1). CF(0) has three main subunits: a(1), b(2) and c(9-12). The alpha and beta chains form an alternating ring which encloses part of the gamma chain. CF(1) is attached to CF(0) by a central stalk formed by the gamma and epsilon chains, while a peripheral stalk is formed by the delta and b chains.

It localises to the cell inner membrane. The catalysed reaction is ATP + H2O + 4 H(+)(in) = ADP + phosphate + 5 H(+)(out). Produces ATP from ADP in the presence of a proton gradient across the membrane. The catalytic sites are hosted primarily by the beta subunits. In Shewanella piezotolerans (strain WP3 / JCM 13877), this protein is ATP synthase subunit beta.